A 970-amino-acid chain; its full sequence is Transposase for insertion sequence element IS1071 in transposon Tn5271 (970 aa).

Belongs to the transposase 7 family.

Its function is as follows. Required for transposition of transposon Tn5271. This chain is Transposase for insertion sequence element IS1071 in transposon Tn5271, found in Comamonas testosteroni (Pseudomonas testosteroni).